The primary structure comprises 321 residues: Anthranilate phosphoribosyltransferase (321 aa).

5-phospho-alpha-D-ribose 1-diphosphate is bound by residues Gly72, 75-76 (GD), Thr80, 82-85 (NVST), 99-107 (KHGNVSITS), and Ser111. Gly72 contributes to the anthranilate binding site. Ser84 lines the Mg(2+) pocket. Asn102 is an anthranilate binding site. Residue Arg157 coordinates anthranilate. Asp216 and Glu217 together coordinate Mg(2+).

It belongs to the anthranilate phosphoribosyltransferase family. Homodimer. It depends on Mg(2+) as a cofactor.

It catalyses the reaction N-(5-phospho-beta-D-ribosyl)anthranilate + diphosphate = 5-phospho-alpha-D-ribose 1-diphosphate + anthranilate. The protein operates within amino-acid biosynthesis; L-tryptophan biosynthesis; L-tryptophan from chorismate: step 2/5. In terms of biological role, catalyzes the transfer of the phosphoribosyl group of 5-phosphorylribose-1-pyrophosphate (PRPP) to anthranilate to yield N-(5'-phosphoribosyl)-anthranilate (PRA). The polypeptide is Anthranilate phosphoribosyltransferase (Methanococcus maripaludis (strain C6 / ATCC BAA-1332)).